A 386-amino-acid chain; its full sequence is ABC transporter permease protein NatB (386 aa).

6 helical membrane-spanning segments follow: residues 19 to 39 (TILL…FFYE), 172 to 192 (AIML…SGAM), 226 to 246 (WLAV…FLIL), 273 to 293 (ALII…ISIM), 300 to 320 (AQSY…FIFS), and 353 to 373 (ATIL…FLLA).

In terms of assembly, the complex is composed of NatA and NatB.

It localises to the cell membrane. The enzyme catalyses Na(+)(in) + ATP + H2O = Na(+)(out) + ADP + phosphate + H(+). Functionally, part of an ABC transporter that catalyzes ATP-dependent electrogenic sodium extrusion. This is ABC transporter permease protein NatB from Bacillus subtilis (strain 168).